A 676-amino-acid chain; its full sequence is Potassium-transporting ATPase ATP-binding subunit (676 aa).

The next 4 membrane-spanning stretches (helical) occupy residues 24–44 (NPVMFVVYLGALITTILCFYP), 45–65 (MGIPLWFNISITIFLWLTLLF), 212–232 (IFLITLTIIFLTVSITLVPFT), and 246–266 (SLVIVIALLICLAPTTIGALI). D302 (4-aspartylphosphate intermediate) is an active-site residue. ATP is bound by residues D339, E343, 372–379 (FSAKTRMS), and K390. Mg(2+) is bound by residues D513 and D517. The next 3 helical transmembrane spans lie at 573–593 (FSIANDIAKYFAVIPVLFYSI), 611–631 (AILSAVIYNAVVIVALIPLAL), and 656–676 (GIIAPFIFIKIIDLILSLIIL).

The protein belongs to the cation transport ATPase (P-type) (TC 3.A.3) family. Type IA subfamily. As to quaternary structure, the system is composed of three essential subunits: KdpA, KdpB and KdpC.

It localises to the cell membrane. It catalyses the reaction K(+)(out) + ATP + H2O = K(+)(in) + ADP + phosphate + H(+). Functionally, part of the high-affinity ATP-driven potassium transport (or Kdp) system, which catalyzes the hydrolysis of ATP coupled with the electrogenic transport of potassium into the cytoplasm. This subunit is responsible for energy coupling to the transport system and for the release of the potassium ions to the cytoplasm. This chain is Potassium-transporting ATPase ATP-binding subunit, found in Enterococcus faecalis (strain ATCC 700802 / V583).